A 339-amino-acid polypeptide reads, in one-letter code: Phenylalanine--tRNA ligase alpha subunit (339 aa).

Glu-254 lines the Mg(2+) pocket.

Belongs to the class-II aminoacyl-tRNA synthetase family. Phe-tRNA synthetase alpha subunit type 1 subfamily. In terms of assembly, tetramer of two alpha and two beta subunits. The cofactor is Mg(2+).

It is found in the cytoplasm. The catalysed reaction is tRNA(Phe) + L-phenylalanine + ATP = L-phenylalanyl-tRNA(Phe) + AMP + diphosphate + H(+). This chain is Phenylalanine--tRNA ligase alpha subunit, found in Alkaliphilus oremlandii (strain OhILAs) (Clostridium oremlandii (strain OhILAs)).